Consider the following 440-residue polypeptide: Chromosome partition protein MukF (440 aa).

Positions 208 to 236 (LSETSGTLRELQDTLDAAGDKLQANLLRI) are leucine-zipper.

It belongs to the MukF family. As to quaternary structure, interacts, and probably forms a ternary complex, with MukE and MukB via its C-terminal region. The complex formation is stimulated by calcium or magnesium. It is required for an interaction between MukE and MukB.

The protein localises to the cytoplasm. It localises to the nucleoid. Involved in chromosome condensation, segregation and cell cycle progression. May participate in facilitating chromosome segregation by condensation DNA from both sides of a centrally located replisome during cell division. Not required for mini-F plasmid partitioning. Probably acts via its interaction with MukB and MukE. Overexpression results in anucleate cells. It has a calcium binding activity. This chain is Chromosome partition protein MukF, found in Klebsiella pneumoniae (strain 342).